The primary structure comprises 146 residues: Cytochrome b5 type B (146 aa).

A propeptide spanning residues 1-11 is cleaved from the precursor; sequence MATPEASGSGE. Ser19 is modified (phosphoserine). The 77-residue stretch at 20–96 folds into the Cytochrome b5 heme-binding domain; that stretch reads VTYYRLEEVA…LKQYYIGDVH (77 aa). The residue at position 30 (Lys30) is an N6-acetyllysine. Position 33 is a phosphoserine (Ser33). Heme contacts are provided by His55 and His79. Ser80 is subject to Phosphoserine. Residues 119 to 136 traverse the membrane as a helical segment; the sequence is WAYWFVPIVGAILIGFLY.

Belongs to the cytochrome b5 family. In terms of assembly, component of a complex composed of cytochrome b5, NADH-cytochrome b5 reductase (CYB5R3) and MTARC2.

The protein resides in the mitochondrion outer membrane. Cytochrome b5 is a membrane-bound hemoprotein functioning as an electron carrier for several membrane-bound oxygenases. This chain is Cytochrome b5 type B (Cyb5b), found in Mus musculus (Mouse).